The chain runs to 282 residues: MEMO1 family protein Msed_2139 (282 aa).

The protein belongs to the MEMO1 family.

This Metallosphaera sedula (strain ATCC 51363 / DSM 5348 / JCM 9185 / NBRC 15509 / TH2) protein is MEMO1 family protein Msed_2139.